A 466-amino-acid chain; its full sequence is Ribulose bisphosphate carboxylase large chain (466 aa).

Residue lysine 5 is modified to N6,N6,N6-trimethyllysine. Positions 114 and 164 each coordinate substrate. Residue lysine 166 is the Proton acceptor of the active site. Lysine 168 contributes to the substrate binding site. Residues lysine 192, aspartate 194, and glutamate 195 each contribute to the Mg(2+) site. The residue at position 192 (lysine 192) is an N6-carboxylysine. Histidine 285 functions as the Proton acceptor in the catalytic mechanism. 3 residues coordinate substrate: arginine 286, histidine 318, and serine 370.

Belongs to the RuBisCO large chain family. Type I subfamily. Heterohexadecamer of 8 large chains and 8 small chains; disulfide-linked. The disulfide link is formed within the large subunit homodimers. The cofactor is Mg(2+). In terms of processing, the disulfide bond which can form in the large chain dimeric partners within the hexadecamer appears to be associated with oxidative stress and protein turnover.

It localises to the plastid. It is found in the chloroplast. The enzyme catalyses 2 (2R)-3-phosphoglycerate + 2 H(+) = D-ribulose 1,5-bisphosphate + CO2 + H2O. It catalyses the reaction D-ribulose 1,5-bisphosphate + O2 = 2-phosphoglycolate + (2R)-3-phosphoglycerate + 2 H(+). RuBisCO catalyzes two reactions: the carboxylation of D-ribulose 1,5-bisphosphate, the primary event in carbon dioxide fixation, as well as the oxidative fragmentation of the pentose substrate in the photorespiration process. Both reactions occur simultaneously and in competition at the same active site. This Saururus cernuus (Lizard's tail) protein is Ribulose bisphosphate carboxylase large chain.